The chain runs to 90 residues: Acylphosphatase (90 aa).

In terms of domain architecture, Acylphosphatase-like spans 3–90; the sequence is AVHMNASGQV…FEGQDFIVKY (88 aa). Catalysis depends on residues R18 and N36.

This sequence belongs to the acylphosphatase family.

It carries out the reaction an acyl phosphate + H2O = a carboxylate + phosphate + H(+). The polypeptide is Acylphosphatase (acyP) (Pediococcus pentosaceus (strain ATCC 25745 / CCUG 21536 / LMG 10740 / 183-1w)).